A 353-amino-acid polypeptide reads, in one-letter code: Stomatin-like protein 2, mitochondrial (353 aa).

Residues 1 to 28 (MLARAARGTGALLLRGSVQASGRVPRRA) constitute a mitochondrion transit peptide. Position 17 is a phosphoserine; by PKC/PRKCZ (S17). Y124 is subject to Phosphotyrosine. N6-acetyllysine; alternate is present on K145. K145 bears the N6-succinyllysine; alternate mark. A coiled-coil region spans residues 215–252 (INVAEGKKQAQILASEAEKAEQINQAAGEASAVLAKAK). The residue at position 233 (K233) is an N6-acetyllysine. The disordered stretch occupies residues 324–353 (VPGAQNSSQSRRDVQATDTSIEELGRVKLS). S330 carries the phosphoserine modification.

Belongs to the band 7/mec-2 family. In terms of assembly, forms homooligomers. Interacts with MFN2; may form heterooligomers. Interacts with PHB1 and PHB2; recruits them to cardiolipin-enriched mitochondrial membranes and stabilizes them. Interacts with CACNA2D2.

Its subcellular location is the cell membrane. The protein localises to the mitochondrion. It is found in the mitochondrion inner membrane. The protein resides in the mitochondrion intermembrane space. It localises to the membrane raft. Its subcellular location is the cytoplasm. The protein localises to the cytoskeleton. Mitochondrial protein that probably regulates the biogenesis and the activity of mitochondria. Stimulates cardiolipin biosynthesis, binds cardiolipin-enriched membranes where it recruits and stabilizes some proteins including prohibitin and may therefore act in the organization of functional microdomains in mitochondrial membranes. Through regulation of the mitochondrial function may play a role into several biological processes including cell migration, cell proliferation, T-cell activation, calcium homeostasis and cellular response to stress. May play a role in calcium homeostasis through negative regulation of calcium efflux from mitochondria. Required for mitochondrial hyperfusion a pro-survival cellular response to stress which results in increased ATP production by mitochondria. May also regulate the organization of functional domains at the plasma membrane and play a role in T-cell activation through association with the T-cell receptor signaling complex and its regulation. The polypeptide is Stomatin-like protein 2, mitochondrial (Stoml2) (Mus musculus (Mouse)).